Reading from the N-terminus, the 249-residue chain is Probable transcriptional regulatory protein OTT_1378 (249 aa).

The protein belongs to the TACO1 family.

It localises to the cytoplasm. The polypeptide is Probable transcriptional regulatory protein OTT_1378 (Orientia tsutsugamushi (strain Ikeda) (Rickettsia tsutsugamushi)).